The chain runs to 235 residues: Large ribosomal subunit protein uL1 (235 aa).

This sequence belongs to the universal ribosomal protein uL1 family. As to quaternary structure, part of the 50S ribosomal subunit.

Binds directly to 23S rRNA. The L1 stalk is quite mobile in the ribosome, and is involved in E site tRNA release. Functionally, protein L1 is also a translational repressor protein, it controls the translation of the L11 operon by binding to its mRNA. The protein is Large ribosomal subunit protein uL1 of Mycobacterium sp. (strain JLS).